We begin with the raw amino-acid sequence, 382 residues long: MTNTTGKINLLGLTQPEMEQFFESIGEKRFRAGQVMKWIHHFGVDDFAAMTNVGKALREKLEASAEIRGPEVVSENISADGTRKWVVRVASGSCVETVYIPQNGRGTLCVSSQAGCALDCSFCSTGKQGFNSDLTSAEIIGQVWIANKSFGTVPAKIDRAITNVVMMGMGEPLLNFDNVVSAMQIMMDDLGYGISKRKVTLSTSGVVPMIDKLAEVIDVSLALSLHAPNDELRNQLVPINKKYPLDMLLAACKRYVAKLGEKRVLTIEYTLLKGVNDQPEHAEQMIALLADVPCKINLIPFNPFPFSGYERPSNNAIRRFQDLLHKAGHNVTVRTTRGDDIDAACGQLVGQVMDRTRRSERYIAVRQLGSEAQEPRAAANRN.

Glu96 acts as the Proton acceptor in catalysis. The Radical SAM core domain occupies 102–340 (QNGRGTLCVS…VTVRTTRGDD (239 aa)). A disulfide bridge connects residues Cys109 and Cys345. [4Fe-4S] cluster is bound by residues Cys116, Cys120, and Cys123. S-adenosyl-L-methionine-binding positions include 170-171 (GE), Ser202, 224-226 (SLH), and Asn302. Cys345 serves as the catalytic S-methylcysteine intermediate.

It belongs to the radical SAM superfamily. RlmN family. Requires [4Fe-4S] cluster as cofactor.

The protein localises to the cytoplasm. It catalyses the reaction adenosine(2503) in 23S rRNA + 2 reduced [2Fe-2S]-[ferredoxin] + 2 S-adenosyl-L-methionine = 2-methyladenosine(2503) in 23S rRNA + 5'-deoxyadenosine + L-methionine + 2 oxidized [2Fe-2S]-[ferredoxin] + S-adenosyl-L-homocysteine. The enzyme catalyses adenosine(37) in tRNA + 2 reduced [2Fe-2S]-[ferredoxin] + 2 S-adenosyl-L-methionine = 2-methyladenosine(37) in tRNA + 5'-deoxyadenosine + L-methionine + 2 oxidized [2Fe-2S]-[ferredoxin] + S-adenosyl-L-homocysteine. Functionally, specifically methylates position 2 of adenine 2503 in 23S rRNA and position 2 of adenine 37 in tRNAs. m2A2503 modification seems to play a crucial role in the proofreading step occurring at the peptidyl transferase center and thus would serve to optimize ribosomal fidelity. The chain is Dual-specificity RNA methyltransferase RlmN from Ectopseudomonas mendocina (strain ymp) (Pseudomonas mendocina).